The primary structure comprises 141 residues: Galactose-6-phosphate isomerase subunit LacA 1 (141 aa).

The protein belongs to the LacAB/RpiB family. Heteromultimeric protein consisting of LacA and LacB.

It carries out the reaction aldehydo-D-galactose 6-phosphate = keto-D-tagatose 6-phosphate. It participates in carbohydrate metabolism; D-galactose 6-phosphate degradation; D-tagatose 6-phosphate from D-galactose 6-phosphate: step 1/1. The sequence is that of Galactose-6-phosphate isomerase subunit LacA 1 from Streptococcus pyogenes serotype M1.